We begin with the raw amino-acid sequence, 457 residues long: Squalene epoxidase erg1 (457 aa).

FAD contacts are provided by residues 15–16 (IT), 35–36 (ER), Arg43, Arg114, Val130, Asp293, and Met306. Transmembrane regions (helical) follow at residues 347–364 (GYSFVINVLSIALYKLFT), 409–429 (FYAVCLYGIYQYVLSGPALLM), and 433–453 (IIESLLIFLQASLVIIPYILS).

Belongs to the squalene monooxygenase family. Requires FAD as cofactor.

It is found in the microsome membrane. The protein localises to the endoplasmic reticulum membrane. Its subcellular location is the vacuole membrane. The catalysed reaction is squalene + reduced [NADPH--hemoprotein reductase] + O2 = (S)-2,3-epoxysqualene + oxidized [NADPH--hemoprotein reductase] + H2O + H(+). It participates in terpene metabolism; lanosterol biosynthesis; lanosterol from farnesyl diphosphate: step 2/3. The protein operates within steroid metabolism; ergosterol biosynthesis. Its activity is regulated as follows. Activity is blocked by the allylamine class antifungal terbinafine. Squalene epoxidase; part of the third module of ergosterol biosynthesis pathway that includes by the late steps of the pathway. Erg1 catalyzes the epoxidation of squalene into 2,3-epoxysqualene. The third module or late pathway involves the ergosterol synthesis itself through consecutive reactions that mainly occur in the endoplasmic reticulum (ER) membrane. Firstly, the squalene synthase erg9 catalyzes the condensation of 2 farnesyl pyrophosphate moieties to form squalene, which is the precursor of all steroids. Secondly, squalene is converted into lanosterol by the consecutive action of the squalene epoxidase erg1 and the lanosterol synthase erg7. The lanosterol 14-alpha-demethylase erg11/cyp1 catalyzes C14-demethylation of lanosterol to produce 4,4'-dimethyl cholesta-8,14,24-triene-3-beta-ol. In the next steps, a complex process involving various demethylation, reduction and desaturation reactions catalyzed by the C-14 reductase erg24 and the C-4 demethylation complex erg25-erg26-erg27 leads to the production of zymosterol. Erg28 likely functions in the C-4 demethylation complex reaction by tethering erg26 and Erg27 to the endoplasmic reticulum or to facilitate interaction between these proteins. Then, the sterol 24-C-methyltransferase erg6 catalyzes the methyl transfer from S-adenosyl-methionine to the C-24 of zymosterol to form fecosterol. The C-8 sterol isomerase erg2 catalyzes the reaction which results in unsaturation at C-7 in the B ring of sterols and thus converts fecosterol to episterol. The sterol-C5-desaturases erg31 and erg32 then catalyze the introduction of a C-5 double bond in the B ring to produce 5-dehydroepisterol. The C-22 sterol desaturase erg5 further converts 5-dehydroepisterol into ergosta-5,7,22,24(28)-tetraen-3beta-ol by forming the C-22(23) double bond in the sterol side chain. Finally, ergosta-5,7,22,24(28)-tetraen-3beta-ol is substrate of the C-24(28) sterol reductase erg4 to produce ergosterol. In the genus Schizosaccharomyces, a second route exists between lanosterol and fecosterol, via the methylation of lanosterol to eburicol by erg6, followed by C14-demethylation by erg11/cyp1 and C4-demethylation by the demethylation complex erg25-erg26-erg27. The polypeptide is Squalene epoxidase erg1 (Schizosaccharomyces pombe (strain 972 / ATCC 24843) (Fission yeast)).